Consider the following 406-residue polypeptide: MTLYRNLLLLASLGLSYAAPSKVQRAPDSSLHARAVCTPTAGGDSSTDDVPAITEALSSCGNGGTIVFPEGSTYYLNSVLDLGNCSNCDIQVEGLLKFASDTDYWSGRTAMISVSDVDGLKLRSLTGSGVIDGNGQDAWDLFASDSSYSRPTLLYITGGSNLEISGLRQKNPPNVFNSVKGGATNVVFSNLKMDANSKSDNPPKNTDGFDIGESTYVTITEVTVVNDDDCVALKPSSNYVTVDTISCTGSHGISVGSLGKSSDDSVKNIYVTGATMINSTKAAGIKTYPSGGDHGTSTVSNVTFTDFTVDNSDYAFQIQSCYGEDDDYCEENPGNAKLTDIVVSSFSGTTSDKYDPVVANIDCGSDGTCGISISGFDVKAPSGKSEVLCANTPSDLGVTCTSGASG.

The N-terminal stretch at 1–18 is a signal peptide; that stretch reads MTLYRNLLLLASLGLSYA. Asparagine 84 carries an N-linked (GlcNAc...) asparagine glycan. PbH1 repeat units lie at residues 183 to 213 and 214 to 235; these read ATNV…DIGE and STYV…ALKP. Aspartate 228 functions as the Proton donor in the catalytic mechanism. The active site involves histidine 251. PbH1 repeat units lie at residues 266 to 289, 299 to 320, and 333 to 375; these read VKNI…KTYP, VSNV…QIQS, and PGNA…SISG. 2 N-linked (GlcNAc...) asparagine glycosylation sites follow: asparagine 278 and asparagine 301.

Belongs to the glycosyl hydrolase 28 family.

The protein resides in the secreted. Pectinolytic enzyme involved in the degradation of xylogalacturonan (xga), a galacturonan backbone heavily substituted with xylose, and which is one important component of the hairy regions of pectin. Activity requires a galacturonic acid backbone substituted with xylose. The polypeptide is Probable endo-xylogalacturonan hydrolase A (xghA) (Aspergillus niger (strain ATCC MYA-4892 / CBS 513.88 / FGSC A1513)).